The sequence spans 203 residues: Gramillins biosynthetic cluster protein FGSG_00038 (203 aa).

The protein operates within mycotoxin biosynthesis. Part of the gene cluster that mediates the biosynthesis of gramillins A and B, bicyclic lipopeptides that induce cell death in maize leaves but not in wheat leaves. The nonribosomal peptide synthetase GRA1 incorporates respectively a glutamic adic (Glu), a leucine (Leu), a serine (Ser), a hydroxyglutamine (HOGln), a 2-amino decanoic acid, and 2 cysteins (CysB and CysA). The biosynthesis of 2-amino decanoic acid incorporated in gramillins could be initiated by a fatty acid synthase composed of the alpha and beta subunits FGSG_00036 and FGSG_11656. The cytochrome P450 monooxygenase FGSG_15680 could hydroxylate the fatty acid chain. Subsequent oxidation to the ketone by the oxidoreductase FGSG_00048 and transamination by aminotransferase FGSG_00049 could form 2-amino-decanoic acid. On the other hand, FGSG_15680 could also be responsible for the HO-modified glutamine at the gamma-position. Whether hydroxylation occurs on the fully assembled product or on the Gln residue prior to assembly into the gramillins requires further proof. The thioredoxin FGSG_00043 could also be required for the disulfide-bond formation between CysA and CysB. The specific involvement of the remaining proteins from the cluster is more difficult to discern, but could have broader regulatory (FGSG_00040 and FGSG_11657) or enzymatic functions (FGSG_00044 and FGSG_00045). The final C-domain of GRA1 does not possess the expected sequence of a termination CT domain, often implicated in macrocyclization and release of a cyclopeptidein fungal NRPs; and the thioesterase FGSG_00047 may act in concert with the terminal C-domain of GRA1 to catalyze the formation of the macrocyclic anhydride and release of the products. The sequence is that of Gramillins biosynthetic cluster protein FGSG_00038 from Gibberella zeae (strain ATCC MYA-4620 / CBS 123657 / FGSC 9075 / NRRL 31084 / PH-1) (Wheat head blight fungus).